The following is a 1073-amino-acid chain: Carbamoyl phosphate synthase large chain (1073 aa).

Positions 2 to 403 (PKRTDIKSIL…SVQKALRGLE (402 aa)) are carboxyphosphate synthetic domain. ATP is bound by residues R129, R169, G175, G176, E208, L210, E215, G241, V242, H243, Q285, and E299. In terms of domain architecture, ATP-grasp 1 spans 133-328 (DKAMKDIGLA…IAKIAAKLAV (196 aa)). Mg(2+)-binding residues include Q285, E299, and N301. The Mn(2+) site is built by Q285, E299, and N301. Residues 404-553 (VGATGFDPKL…YSTYEEECEA (150 aa)) are oligomerization domain. Residues 554–935 (NPSSREKIMI…AFAKAQLGAS (382 aa)) are carbamoyl phosphate synthetic domain. The ATP-grasp 2 domain occupies 678 to 869 (QQMVQRLNLR…LAKVAARVMA (192 aa)). Positions 714, 753, 755, 760, 785, 786, 787, 788, 828, and 840 each coordinate ATP. 3 residues coordinate Mg(2+): Q828, E840, and N842. Positions 828, 840, and 842 each coordinate Mn(2+). Residues 936 to 1073 (EILPTAGCAF…LQDLHAGIKA (138 aa)) enclose the MGS-like domain. The interval 936–1073 (EILPTAGCAF…LQDLHAGIKA (138 aa)) is allosteric domain.

It belongs to the CarB family. As to quaternary structure, composed of two chains; the small (or glutamine) chain promotes the hydrolysis of glutamine to ammonia, which is used by the large (or ammonia) chain to synthesize carbamoyl phosphate. Tetramer of heterodimers (alpha,beta)4. Requires Mg(2+) as cofactor. The cofactor is Mn(2+).

The enzyme catalyses hydrogencarbonate + L-glutamine + 2 ATP + H2O = carbamoyl phosphate + L-glutamate + 2 ADP + phosphate + 2 H(+). The catalysed reaction is hydrogencarbonate + NH4(+) + 2 ATP = carbamoyl phosphate + 2 ADP + phosphate + 2 H(+). It functions in the pathway amino-acid biosynthesis; L-arginine biosynthesis; carbamoyl phosphate from bicarbonate: step 1/1. It participates in pyrimidine metabolism; UMP biosynthesis via de novo pathway; (S)-dihydroorotate from bicarbonate: step 1/3. Functionally, large subunit of the glutamine-dependent carbamoyl phosphate synthetase (CPSase). CPSase catalyzes the formation of carbamoyl phosphate from the ammonia moiety of glutamine, carbonate, and phosphate donated by ATP, constituting the first step of 2 biosynthetic pathways, one leading to arginine and/or urea and the other to pyrimidine nucleotides. The large subunit (synthetase) binds the substrates ammonia (free or transferred from glutamine from the small subunit), hydrogencarbonate and ATP and carries out an ATP-coupled ligase reaction, activating hydrogencarbonate by forming carboxy phosphate which reacts with ammonia to form carbamoyl phosphate. This chain is Carbamoyl phosphate synthase large chain, found in Pseudomonas aeruginosa (strain ATCC 15692 / DSM 22644 / CIP 104116 / JCM 14847 / LMG 12228 / 1C / PRS 101 / PAO1).